The primary structure comprises 132 residues: Dehydratase CTB10 (132 aa).

An EthD domain is found at 21 to 117; sequence PDQSEEDHHN…IPDHFNFADM (97 aa).

This sequence belongs to the tpcK family.

The protein operates within mycotoxin biosynthesis. Functionally, dehydratase; part of the gene cluster that mediates the biosynthesis of cercosporin, a light-activated, non-host-selective toxin. The perylenequinone chromophore of cercosporin absorbs light energy to attain an electronically-activated triplet state and produces active oxygen species such as the hydroxyl radical, superoxide, hydrogen peroxide or singlet oxygen upon reaction with oxygen molecules. These reactive oxygen species cause damage to various cellular components including lipids, proteins and nucleic acids. The first step of cercosporin biosynthesis is performed by the polyketide synthase CTB1 which catalyzes the formation of nor-toralactone. The starter unit acyltransferase (SAT) domain of CTB1 initiates polyketide extension by the selective utilization of acetyl-CoA, which is elongated to the heptaketide in the beta-ketoacyl synthase (KS) domain by successive condensations with six malonyl units introduced by the malonyl acyltransferase (MAT) domain. The product template (PT) domain catalyzes C4-C9 and C2-C11 aldol cyclizations and dehydrations to a trihydroxynaphthalene, which is thought to be delivered to the thioesterase (TE) domain for product release. The bifunctional enzyme CTB3 then methylates nor-toralactone to toralactone before conducting an unusual oxidative aromatic ring opening. The O-methyltransferase CTB2 further methylates the nascent OH-6 of the CBT3 product, blocking further oxidation at this site before the reductase CTB6 reduces the 2-oxopropyl ketone at position C7, giving naphthalene. The FAD-dependent monooxygenase CTB5 in concert with the multicopper oxidase CTB12 are responsible for homodimerization of naphthalene with CTB7 installing the dioxepine moiety, finally producing cercosporin. The fasciclin domain-containing protein CTB11 might act with CTB5 and CTB12 whereas the roles of CTB9 and CTB10 have still to be elucidated. The chain is Dehydratase CTB10 from Cercospora beticola (Sugarbeet leaf spot fungus).